The chain runs to 443 residues: Serine/threonine-protein kinase SSN3 (443 aa).

A disordered region spans residues 1-24; that stretch reads MERKRGREMNPPSADPPSATPVAR. Residues 54-384 enclose the Protein kinase domain; it reads YKIVGFISSG…AEKALEHRYF (331 aa). ATP-binding positions include 60-68 and K84; that span reads ISSGTYGRV. Catalysis depends on D185, which acts as the Proton acceptor. The interval 405–443 is disordered; it reads RRVSQEDNDIRTSSLPGTKRSGLPDDSLMGRPAKRLKEG.

It belongs to the protein kinase superfamily. CMGC Ser/Thr protein kinase family. CDC2/CDKX subfamily. Component of the srb8-11 complex, a regulatory module of the Mediator complex. The cofactor is Mg(2+).

Its subcellular location is the nucleus. It carries out the reaction L-seryl-[protein] + ATP = O-phospho-L-seryl-[protein] + ADP + H(+). The catalysed reaction is L-threonyl-[protein] + ATP = O-phospho-L-threonyl-[protein] + ADP + H(+). The enzyme catalyses [DNA-directed RNA polymerase] + ATP = phospho-[DNA-directed RNA polymerase] + ADP + H(+). In terms of biological role, component of the srb8-11 complex. The srb8-11 complex is a regulatory module of the Mediator complex which is itself dependent transcription. The srb8-11 complex may be involved in the transcriptional repression of a subset of genes regulated by Mediator. It may inhibit the association of the Mediator complex with RNA polymerase II to form the holoenzyme complex. The srb8-11 complex phosphorylates the C-terminal domain (CTD) of the largest subunit of RNA polymerase II. The polypeptide is Serine/threonine-protein kinase SSN3 (SSN3) (Phaeosphaeria nodorum (strain SN15 / ATCC MYA-4574 / FGSC 10173) (Glume blotch fungus)).